The following is a 117-amino-acid chain: MSKHHPDLVLCRRQPGITVGKLCERCDEKCPICDSHVRPTTLVRICDECAFGSSQDRCIICGAPGVSDCYYCSECTRMEYDRDGCPRVINLGSSRTDWFYERKKFKNAGKEMPGATY.

The protein belongs to the PHF5 family.

The protein resides in the nucleus. In terms of biological role, required for pre-mRNA splicing. The chain is Pre-mRNA-splicing factor ini1 (ini1) from Schizosaccharomyces pombe (strain 972 / ATCC 24843) (Fission yeast).